The primary structure comprises 99 residues: Aspartyl/glutamyl-tRNA(Asn/Gln) amidotransferase subunit C (99 aa).

The protein belongs to the GatC family. As to quaternary structure, heterotrimer of A, B and C subunits.

It carries out the reaction L-glutamyl-tRNA(Gln) + L-glutamine + ATP + H2O = L-glutaminyl-tRNA(Gln) + L-glutamate + ADP + phosphate + H(+). The catalysed reaction is L-aspartyl-tRNA(Asn) + L-glutamine + ATP + H2O = L-asparaginyl-tRNA(Asn) + L-glutamate + ADP + phosphate + 2 H(+). Allows the formation of correctly charged Asn-tRNA(Asn) or Gln-tRNA(Gln) through the transamidation of misacylated Asp-tRNA(Asn) or Glu-tRNA(Gln) in organisms which lack either or both of asparaginyl-tRNA or glutaminyl-tRNA synthetases. The reaction takes place in the presence of glutamine and ATP through an activated phospho-Asp-tRNA(Asn) or phospho-Glu-tRNA(Gln). The sequence is that of Aspartyl/glutamyl-tRNA(Asn/Gln) amidotransferase subunit C from Kineococcus radiotolerans (strain ATCC BAA-149 / DSM 14245 / SRS30216).